A 121-amino-acid chain; its full sequence is Small ribosomal subunit protein uS13 (121 aa).

A disordered region spans residues 91–121 (HRRGLPVRGQNSKNNARTRKGPRRTVANKKK). Over residues 106–121 (ARTRKGPRRTVANKKK) the composition is skewed to basic residues.

This sequence belongs to the universal ribosomal protein uS13 family. In terms of assembly, part of the 30S ribosomal subunit. Forms a loose heterodimer with protein S19. Forms two bridges to the 50S subunit in the 70S ribosome.

Functionally, located at the top of the head of the 30S subunit, it contacts several helices of the 16S rRNA. In the 70S ribosome it contacts the 23S rRNA (bridge B1a) and protein L5 of the 50S subunit (bridge B1b), connecting the 2 subunits; these bridges are implicated in subunit movement. Contacts the tRNAs in the A and P-sites. In Bacillus mycoides (strain KBAB4) (Bacillus weihenstephanensis), this protein is Small ribosomal subunit protein uS13.